The sequence spans 626 residues: Polypeptide N-acetylgalactosaminyltransferase 5 (626 aa).

Over Met1 to Lys11 the chain is Cytoplasmic. The chain crosses the membrane as a helical; Signal-anchor for type II membrane protein span at residues Val12–Ser31. Residue Asn32 is glycosylated (N-linked (GlcNAc...) asparagine). Residues Asn32–Ser626 are Lumenal-facing. Intrachain disulfides connect Cys165–Cys399, Cys390–Cys466, Cys502–Cys521, Cys544–Cys557, and Cys583–Cys598. Residues Leu174–Arg284 form a catalytic subdomain A region. 2 residues coordinate substrate: Asp215 and Arg245. Asp268 is a Mn(2+) binding site. Ser269 is a substrate binding site. His270 is a Mn(2+) binding site. Asn338 is a glycosylation site (N-linked (GlcNAc...) asparagine). The segment at Pro345–Arg407 is catalytic subdomain B. Trp376 serves as a coordination point for substrate. His404 is a Mn(2+) binding site. Substrate-binding residues include Arg407 and Tyr412. The 123-residue stretch at Ala488 to Lys610 folds into the Ricin B-type lectin domain.

This sequence belongs to the glycosyltransferase 2 family. GalNAc-T subfamily. Mn(2+) is required as a cofactor.

The protein localises to the golgi apparatus membrane. The catalysed reaction is L-seryl-[protein] + UDP-N-acetyl-alpha-D-galactosamine = a 3-O-[N-acetyl-alpha-D-galactosaminyl]-L-seryl-[protein] + UDP + H(+). It carries out the reaction L-threonyl-[protein] + UDP-N-acetyl-alpha-D-galactosamine = a 3-O-[N-acetyl-alpha-D-galactosaminyl]-L-threonyl-[protein] + UDP + H(+). Its pathway is protein modification; protein glycosylation. Catalyzes the initial reaction in O-linked oligosaccharide biosynthesis, the transfer of an N-acetyl-D-galactosamine residue to a serine or threonine residue on the protein receptor. The sequence is that of Polypeptide N-acetylgalactosaminyltransferase 5 (gly-5) from Caenorhabditis elegans.